The following is a 365-amino-acid chain: tRNA/tmRNA (uracil-C(5))-methyltransferase (365 aa).

S-adenosyl-L-methionine contacts are provided by Gln189, Tyr217, Asn222, Glu238, and Asp298. The Nucleophile role is filled by Cys323. The active-site Proton acceptor is Glu357.

It belongs to the class I-like SAM-binding methyltransferase superfamily. RNA M5U methyltransferase family. TrmA subfamily.

It catalyses the reaction uridine(54) in tRNA + S-adenosyl-L-methionine = 5-methyluridine(54) in tRNA + S-adenosyl-L-homocysteine + H(+). The catalysed reaction is uridine(341) in tmRNA + S-adenosyl-L-methionine = 5-methyluridine(341) in tmRNA + S-adenosyl-L-homocysteine + H(+). In terms of biological role, dual-specificity methyltransferase that catalyzes the formation of 5-methyluridine at position 54 (m5U54) in all tRNAs, and that of position 341 (m5U341) in tmRNA (transfer-mRNA). This Shewanella sediminis (strain HAW-EB3) protein is tRNA/tmRNA (uracil-C(5))-methyltransferase.